A 50-amino-acid polypeptide reads, in one-letter code: Insulin (50 aa).

Disulfide bonds link Cys-7–Cys-36, Cys-19–Cys-49, and Cys-35–Cys-40.

Belongs to the insulin family. Heterodimer of a B chain and an A chain linked by two disulfide bonds.

The protein resides in the secreted. Its function is as follows. Insulin decreases blood glucose concentration. It increases cell permeability to monosaccharides, amino acids and fatty acids. It accelerates glycolysis, the pentose phosphate cycle, and glycogen synthesis in liver. In Oncorhynchus gorbuscha (Pink salmon), this protein is Insulin (ins).